Reading from the N-terminus, the 904-residue chain is Protein translocase subunit SecA (904 aa).

Residues Gln89, 107–111 (GEGKT), and Asp496 contribute to the ATP site. The segment at 870–904 (GGFQELSSGTPSPTVTVTTSSGGGTERKTSRRRKR) is disordered. The segment covering 876 to 889 (SSGTPSPTVTVTTS) has biased composition (low complexity).

Belongs to the SecA family. As to quaternary structure, monomer and homodimer. Part of the essential Sec protein translocation apparatus which comprises SecA, SecYEG and auxiliary proteins SecDF. Other proteins may also be involved.

It is found in the cell inner membrane. Its subcellular location is the cytoplasm. It catalyses the reaction ATP + H2O + cellular proteinSide 1 = ADP + phosphate + cellular proteinSide 2.. Part of the Sec protein translocase complex. Interacts with the SecYEG preprotein conducting channel. Has a central role in coupling the hydrolysis of ATP to the transfer of proteins into and across the cell membrane, serving as an ATP-driven molecular motor driving the stepwise translocation of polypeptide chains across the membrane. This chain is Protein translocase subunit SecA, found in Leptospira borgpetersenii serovar Hardjo-bovis (strain L550).